The chain runs to 348 residues: Sensor protein VraS (348 aa).

Transmembrane regions (helical) follow at residues 13-33 (ILVYSMLTAFLFIDKVFVNII) and 43-63 (IFGIPVFLFLNLVIILLCIIV). The Histidine kinase domain maps to 150–341 (RLARELHDSV…RIEVKAPLNR (192 aa)).

The protein localises to the cell membrane. It carries out the reaction ATP + protein L-histidine = ADP + protein N-phospho-L-histidine.. Its function is as follows. Member of the two-component regulatory system VraS/VraR involved in the control of the cell wall peptidoglycan biosynthesis. Probably activates VraR by phosphorylation. In Staphylococcus haemolyticus (strain JCSC1435), this protein is Sensor protein VraS (vraS).